Reading from the N-terminus, the 181-residue chain is Adenylate kinase (181 aa).

An ATP-binding site is contributed by 10-15 (GAGKGT). The NMP stretch occupies residues 30–59 (STGDLFRANIGEGTPLGIEAKQYIDAGKLV). AMP-binding positions include T31, R36, 57 to 59 (KLV), 85 to 88 (GFPR), and Q92. The tract at residues 126-132 (SRGRADD) is LID. Residue R127 participates in ATP binding. Residues R129 and R140 each contribute to the AMP site. G166 contacts ATP.

It belongs to the adenylate kinase family. As to quaternary structure, monomer.

The protein resides in the cytoplasm. The catalysed reaction is AMP + ATP = 2 ADP. Its pathway is purine metabolism; AMP biosynthesis via salvage pathway; AMP from ADP: step 1/1. In terms of biological role, catalyzes the reversible transfer of the terminal phosphate group between ATP and AMP. Plays an important role in cellular energy homeostasis and in adenine nucleotide metabolism. The sequence is that of Adenylate kinase from Corynebacterium glutamicum (strain R).